Reading from the N-terminus, the 110-residue chain is Chloride intracellular channel protein 1 (110 aa).

Alanine 2 is modified (N-acetylalanine). Positions 2 to 90 (AEEQPQVELF…EEFLEAVLCP (89 aa)) are required for insertion into the membrane. Residue lysine 13 is modified to N6-acetyllysine. The G-site signature appears at 24-27 (CPFS). Cysteine 24 and cysteine 59 are oxidised to a cystine. The chain crosses the membrane as a helical span at residues 26–46 (FSQRLFMVLWLKGVTFNVTTV).

It belongs to the chloride channel CLIC family. Monomer. Homodimer (in vitro). Interacts with TRAPPC2. Dimerization requires a conformation change that leads to the exposure of a large hydrophobic surface. In vivo, this may lead to membrane insertion.

It localises to the nucleus. Its subcellular location is the nucleus membrane. The protein localises to the cytoplasm. It is found in the cell membrane. The protein resides in the endoplasmic reticulum. It carries out the reaction L-dehydroascorbate + 2 glutathione = glutathione disulfide + L-ascorbate. The enzyme catalyses chloride(in) = chloride(out). The catalysed reaction is iodide(out) = iodide(in). It catalyses the reaction thiocyanate(in) = thiocyanate(out). It carries out the reaction nitrate(in) = nitrate(out). The enzyme catalyses bromide(in) = bromide(out). The catalysed reaction is fluoride(in) = fluoride(out). Functionally, in the soluble state, catalyzes glutaredoxin-like thiol disulfide exchange reactions with reduced glutathione as electron donor. Reduces selenite and dehydroascorbate and may act as an antioxidant during oxidative stress response. Can insert into membranes and form voltage-dependent multi-ion conductive channels. Membrane insertion seems to be redox-regulated and may occur only under oxidizing conditions. Involved in regulation of the cell cycle. The sequence is that of Chloride intracellular channel protein 1 (CLIC1) from Sus scrofa (Pig).